The chain runs to 327 residues: Zinc transport protein ZntB (327 aa).

The Cytoplasmic portion of the chain corresponds to 1-273 (MEAIKGSEVN…ARRTYTMSLM (273 aa)). Residues 274–294 (AMVFLPSTFLTGLFGVNLGGI) form a helical membrane-spanning segment. Residues 295–300 (PGGAWH) are Periplasmic-facing. A helical membrane pass occupies residues 301-321 (FGFSMFCILLVVLIGGVTLWL). The Cytoplasmic segment spans residues 322–327 (HRSKWL).

This sequence belongs to the CorA metal ion transporter (MIT) (TC 1.A.35) family.

The protein localises to the cell inner membrane. It carries out the reaction Zn(2+)(out) + H(+)(out) = Zn(2+)(in) + H(+)(in). Zinc transporter. Acts as a Zn(2+):proton symporter, which likely mediates zinc ion uptake. This Citrobacter koseri (strain ATCC BAA-895 / CDC 4225-83 / SGSC4696) protein is Zinc transport protein ZntB.